The primary structure comprises 29 residues: GLPICGETCVGGTCNTPGCSCSWPVCTRN.

Residues Gly-1 to Asn-29 constitute a cross-link (cyclopeptide (Gly-Asn)). Intrachain disulfides connect Cys-5–Cys-19, Cys-9–Cys-21, and Cys-14–Cys-26.

This is a cyclic peptide.

Functionally, probably participates in a plant defense mechanism. Has cytotoxic activity against human lymphoma U-937 GTB and human myeloma RPMI-8226/s cell lines. The polypeptide is Varv peptide E (Viola arvensis (European field pansy)).